The sequence spans 294 residues: MSKVKVAILGSGNIGTDLMMKLERSNILQLTAMIGIDPESDGLRRAKEKGYTVISTGIKGFLEQPELADIVFDATSAKAHIRHAKLLKEAGKTVLDLTPAAVGALVVPPVNLHKHLDEWNVNLITCGGQATIPIVHAINRVHPVGYAEIVATIASKSAGPGTRANIDEFTQTTARGIEKIGGAKKGKAIIILNPAEPPIMMRNTVYALVEEGKIDENAIVQSILEMVKTVQSYVPGYRIRTEPIMDGNKITVFLEVEGAGDYLPKYSGNLDIMTAAAVKVAEELAKHKLAAQTA.

An NAD(+)-binding site is contributed by 11–14; that stretch reads SGNI. The active-site Acyl-thioester intermediate is the Cys126. NAD(+) contacts are provided by residues 157–165 and Asn269; that span reads SAGPGTRAN.

It belongs to the acetaldehyde dehydrogenase family.

The catalysed reaction is acetaldehyde + NAD(+) + CoA = acetyl-CoA + NADH + H(+). This chain is Acetaldehyde dehydrogenase (pheF), found in Geobacillus stearothermophilus (Bacillus stearothermophilus).